The following is an 837-amino-acid chain: Anaphase-promoting complex subunit 4 (837 aa).

Composition is skewed to low complexity over residues 59–81 (NDNN…NDNN) and 547–581 (SSSS…NNNN). 2 disordered regions span residues 59-89 (NDNN…KSNK) and 547-588 (SSSS…QSGN).

This sequence belongs to the APC4 family. In terms of assembly, the APC/C is composed of at least 13 subunits that stay tightly associated throughout the cell cycle: anapc1, anapc2, anapc3, anapc4, anapc5, anapc6, anapc7, anapc8, anapc10, anapc11, cdc20, cdc26 and cdh1.

It localises to the nucleus. Its pathway is protein modification; protein ubiquitination. Its function is as follows. Component of the anaphase promoting complex/cyclosome (APC/C), a cell cycle-regulated E3 ubiquitin-protein ligase complex that controls progression through mitosis and the G1 phase of the cell cycle. This is Anaphase-promoting complex subunit 4 (anapc4) from Dictyostelium discoideum (Social amoeba).